Consider the following 243-residue polypeptide: Undecaprenyl-phosphate mannosyltransferase (243 aa).

This sequence belongs to the glycosyltransferase 2 family.

The catalysed reaction is di-trans,octa-cis-undecaprenyl phosphate + GDP-alpha-D-mannose = D-mannosyl di-trans,octa-cis-undecaprenyl phosphate + GDP. In terms of biological role, catalyzes the transfer of mannose from GDP-mannose to D-mannosyl-1-phosphoundecaprenol. This chain is Undecaprenyl-phosphate mannosyltransferase, found in Micrococcus luteus (strain ATCC 4698 / DSM 20030 / JCM 1464 / CCM 169 / CCUG 5858 / IAM 1056 / NBRC 3333 / NCIMB 9278 / NCTC 2665 / VKM Ac-2230) (Micrococcus lysodeikticus).